We begin with the raw amino-acid sequence, 203 residues long: HTH-type transcriptional regulator BetI (203 aa).

In terms of domain architecture, HTH tetR-type spans P8–L68. Positions T31–F50 form a DNA-binding region, H-T-H motif.

The protein operates within amine and polyamine biosynthesis; betaine biosynthesis via choline pathway [regulation]. In terms of biological role, repressor involved in the biosynthesis of the osmoprotectant glycine betaine. It represses transcription of the choline transporter BetT and the genes of BetAB involved in the synthesis of glycine betaine. This is HTH-type transcriptional regulator BetI from Rhizobium meliloti (strain 1021) (Ensifer meliloti).